The chain runs to 400 residues: MAKAKFERTKPHVNIGTIGHVDHGKTTLTAAITKVLALKGKAQFMAYDQIDKAPEERERGITINTAHVEYETDARHYAHVDCPGHADYVKNMITGAAQMDGAILVVSAADGPMPQTREHILLARQVNVPYIVVFLNKVDMVDDPELIELVEMEVRELLSKYGYPGDEVPIVKGSALKALESPSQDPNAPEYQCILELMDVVDKYIPTPQRDVDKPFLMPIEDVFSITGRGTVVTGRVERGTLKTGEEVEIVGFAPEPRKTVVTGIEMFRKVLDEAVAGDNVGCLLRGIQKNEVERGQVLAKPGTIKPHTKFKAQVYVLTKEEGGRHTPFFNGYRPQFYFRTTDVTGTITLPEGVEMCMPGDNVEMTVELISPIAIESGLRFAIREGGRTVGAGSVTTIIE.

A tr-type G domain is found at 10-209 (KPHVNIGTIG…VVDKYIPTPQ (200 aa)). Positions 19-26 (GHVDHGKT) are G1. 19–26 (GHVDHGKT) provides a ligand contact to GTP. T26 serves as a coordination point for Mg(2+). The G2 stretch occupies residues 60–64 (GITIN). A G3 region spans residues 81 to 84 (DCPG). GTP contacts are provided by residues 81–85 (DCPGH) and 136–139 (NKVD). Residues 136-139 (NKVD) form a G4 region. Residues 174 to 176 (SAL) are G5.

It belongs to the TRAFAC class translation factor GTPase superfamily. Classic translation factor GTPase family. EF-Tu/EF-1A subfamily. As to quaternary structure, monomer.

It localises to the cytoplasm. The catalysed reaction is GTP + H2O = GDP + phosphate + H(+). Functionally, GTP hydrolase that promotes the GTP-dependent binding of aminoacyl-tRNA to the A-site of ribosomes during protein biosynthesis. This Caldicellulosiruptor saccharolyticus (strain ATCC 43494 / DSM 8903 / Tp8T 6331) protein is Elongation factor Tu.